Reading from the N-terminus, the 713-residue chain is Phosphoribosylformylglycinamidine synthase subunit PurL (713 aa).

Histidine 32 is an active-site residue. Position 35 (tyrosine 35) interacts with ATP. Position 76 (glutamate 76) interacts with Mg(2+). Substrate contacts are provided by residues serine 77–histidine 80 and arginine 99. Histidine 78 functions as the Proton acceptor in the catalytic mechanism. Residue aspartate 100 coordinates Mg(2+). Glutamine 224 is a binding site for substrate. A Mg(2+)-binding site is contributed by aspartate 252. Residue glutamate 296 to glutamine 298 coordinates substrate. 2 residues coordinate ATP: aspartate 471 and glycine 508. Asparagine 509 lines the Mg(2+) pocket. Serine 511 provides a ligand contact to substrate.

Belongs to the FGAMS family. In terms of assembly, monomer. Part of the FGAM synthase complex composed of 1 PurL, 1 PurQ and 2 PurS subunits.

The protein localises to the cytoplasm. The catalysed reaction is N(2)-formyl-N(1)-(5-phospho-beta-D-ribosyl)glycinamide + L-glutamine + ATP + H2O = 2-formamido-N(1)-(5-O-phospho-beta-D-ribosyl)acetamidine + L-glutamate + ADP + phosphate + H(+). The protein operates within purine metabolism; IMP biosynthesis via de novo pathway; 5-amino-1-(5-phospho-D-ribosyl)imidazole from N(2)-formyl-N(1)-(5-phospho-D-ribosyl)glycinamide: step 1/2. Part of the phosphoribosylformylglycinamidine synthase complex involved in the purines biosynthetic pathway. Catalyzes the ATP-dependent conversion of formylglycinamide ribonucleotide (FGAR) and glutamine to yield formylglycinamidine ribonucleotide (FGAM) and glutamate. The FGAM synthase complex is composed of three subunits. PurQ produces an ammonia molecule by converting glutamine to glutamate. PurL transfers the ammonia molecule to FGAR to form FGAM in an ATP-dependent manner. PurS interacts with PurQ and PurL and is thought to assist in the transfer of the ammonia molecule from PurQ to PurL. The protein is Phosphoribosylformylglycinamidine synthase subunit PurL of Thermococcus sibiricus (strain DSM 12597 / MM 739).